The following is a 404-amino-acid chain: MPPKKAPPGPSKKTEQKKKEKVIEDKTFGLKNKKGNKQQKFIQQVQKQVQSGGQHPRQDGDKRKEEKEKKLAEQREMALIFKPVQTQKVEKGTDPKSVVCAFFKQGTCTKGDKCKFSHDLSQENKVEKRSIYVDMRDEDDPMTNWDDAKLKEVVEKKSSGEKQRPTTDIICKFFLEAVEKSKYGWFWECPNGGKCIYRHALPAGYVLKRDKKKEEKPTEISLVDLIEKERAALGPNQTRVTLESFLAWKKRKIAEKKAKLAAEEERKKSDFSKGKQFGISGREMFSFNPDLVDDGPMEEGDAAFDVYNREDDDDNAVEFKELDLAALSLAAKEVDGSGTIASTNRLLDQATEAAKTAAAEDAAADEDGPSSSAPANDAAPINKDLFVDLAGELDDLDLDDEDDD.

Residues 1–10 (MPPKKAPPGP) are compositionally biased toward pro residues. Residues 1-71 (MPPKKAPPGP…KRKEEKEKKL (71 aa)) are disordered. Positions 12-28 (KKTEQKKKEKVIEDKTF) are enriched in basic and acidic residues. Positions 38 to 50 (QQKFIQQVQKQVQ) are enriched in low complexity. The span at 56–71 (PRQDGDKRKEEKEKKL) shows a compositional bias: basic and acidic residues. 2 C3H1-type zinc fingers span residues 94-121 (DPKS…HDLS) and 165-202 (PTTD…HALP). Thr218 is subject to Phosphothreonine. Residue Ser221 is modified to Phosphoserine. A coiled-coil region spans residues 246-270 (LAWKKRKIAEKKAKLAAEEERKKSD). Composition is skewed to low complexity over residues 352 to 361 (EAAKTAAAED) and 369 to 380 (PSSSAPANDAAP). Residues 352-380 (EAAKTAAAEDAAADEDGPSSSAPANDAAP) form a disordered region.

It belongs to the ZC3H15/TMA46 family.

The chain is Zinc finger CCCH domain-containing protein 15 homolog from Drosophila melanogaster (Fruit fly).